Consider the following 235-residue polypeptide: 15,16-dihydrobiliverdin:ferredoxin oxidoreductase (235 aa).

This sequence belongs to the HY2 family.

The catalysed reaction is 15,16-dihydrobiliverdin + oxidized 2[4Fe-4S]-[ferredoxin] = biliverdin IXalpha + reduced 2[4Fe-4S]-[ferredoxin] + 2 H(+). In terms of biological role, catalyzes the two-electron reduction of biliverdin IX-alpha at the C15 methine bridge. This Synechococcus sp. (strain CC9605) protein is 15,16-dihydrobiliverdin:ferredoxin oxidoreductase.